A 242-amino-acid polypeptide reads, in one-letter code: Probable 2-phosphosulfolactate phosphatase (242 aa).

This sequence belongs to the ComB family. Requires Mg(2+) as cofactor.

It catalyses the reaction (2R)-O-phospho-3-sulfolactate + H2O = (2R)-3-sulfolactate + phosphate. The polypeptide is Probable 2-phosphosulfolactate phosphatase (Picosynechococcus sp. (strain ATCC 27264 / PCC 7002 / PR-6) (Agmenellum quadruplicatum)).